The primary structure comprises 563 residues: Light-independent protochlorophyllide reductase subunit B (563 aa).

A [4Fe-4S] cluster-binding site is contributed by Asp36. Asp293 (proton donor) is an active-site residue. 437–438 (GM) contributes to the substrate binding site. Residues 459–478 (ERREAEFGNQKVETGEPGTG) are disordered.

Belongs to the ChlB/BchB/BchZ family. As to quaternary structure, protochlorophyllide reductase is composed of three subunits; BchL, BchN and BchB. Forms a heterotetramer of two BchB and two BchN subunits. [4Fe-4S] cluster serves as cofactor.

The catalysed reaction is chlorophyllide a + oxidized 2[4Fe-4S]-[ferredoxin] + 2 ADP + 2 phosphate = protochlorophyllide a + reduced 2[4Fe-4S]-[ferredoxin] + 2 ATP + 2 H2O. It participates in porphyrin-containing compound metabolism; bacteriochlorophyll biosynthesis (light-independent). Functionally, component of the dark-operative protochlorophyllide reductase (DPOR) that uses Mg-ATP and reduced ferredoxin to reduce ring D of protochlorophyllide (Pchlide) to form chlorophyllide a (Chlide). This reaction is light-independent. The NB-protein (BchN-BchB) is the catalytic component of the complex. This chain is Light-independent protochlorophyllide reductase subunit B, found in Roseiflexus castenholzii (strain DSM 13941 / HLO8).